Here is a 199-residue protein sequence, read N- to C-terminus: uncharacterized protein (199 aa).

Positions 1–28 (MKKLATVGSLIVTSTLVFSSMPFQNAHA) are cleaved as a signal peptide.

Its subcellular location is the secreted. This is an uncharacterized protein from Staphylococcus aureus (strain NCTC 8325 / PS 47).